The primary structure comprises 627 residues: Pescadillo homolog (627 aa).

In terms of domain architecture, BRCT spans 321–414 (RLRTLFKGLK…QLLPTNKYFI (94 aa)). Disordered stretches follow at residues 450-469 (HAQSDDDSEDEAQEEEETVD), 488-566 (YKKY…MVKP), and 595-627 (TIEASEKEARKTAKREARKEAAAAAAKASKLGK). 2 positions are modified to phosphoserine: S453 and S457. Composition is skewed to acidic residues over residues 454–469 (DDDSEDEAQEEEETVD) and 497–521 (VNEDEEDPEDEDDNEDDDEEEEELD). Positions 522-533 (EKTKRLQEEKQK) are enriched in basic and acidic residues. The span at 540 to 549 (KVHKVNKRQV) shows a compositional bias: basic residues. Basic and acidic residues-rich tracts occupy residues 550 to 559 (HKAEVDEHRL) and 595 to 615 (TIEASEKEARKTAKREARKEA). Residues 582-625 (KEKEEWLLRKKRRTIEASEKEARKTAKREARKEAAAAAAKASKL) adopt a coiled-coil conformation. Residues 616–627 (AAAAAKASKLGK) are compositionally biased toward low complexity.

This sequence belongs to the pescadillo family.

Its subcellular location is the nucleus. The protein localises to the nucleolus. It localises to the nucleoplasm. Functionally, required for maturation of ribosomal RNAs and formation of the large ribosomal subunit. This is Pescadillo homolog from Drosophila simulans (Fruit fly).